Consider the following 263-residue polypeptide: Hydroxyethylthiazole kinase (263 aa).

A substrate-binding site is contributed by methionine 39. Positions 115 and 160 each coordinate ATP. Glycine 187 contacts substrate.

It belongs to the Thz kinase family. Requires Mg(2+) as cofactor.

The catalysed reaction is 5-(2-hydroxyethyl)-4-methylthiazole + ATP = 4-methyl-5-(2-phosphooxyethyl)-thiazole + ADP + H(+). The protein operates within cofactor biosynthesis; thiamine diphosphate biosynthesis; 4-methyl-5-(2-phosphoethyl)-thiazole from 5-(2-hydroxyethyl)-4-methylthiazole: step 1/1. Catalyzes the phosphorylation of the hydroxyl group of 4-methyl-5-beta-hydroxyethylthiazole (THZ). The protein is Hydroxyethylthiazole kinase of Staphylococcus aureus (strain COL).